Consider the following 328-residue polypeptide: Interleukin-12 subunit beta (328 aa).

The signal sequence occupies residues 1 to 22; the sequence is MCHQQLVISWFSLVFLASPLMA. The 78-residue stretch at 29 to 106 folds into the Ig-like C2-type domain; it reads DVYVVELDWY…LSHSLLLLHK (78 aa). Cysteines 50 and 90 form a disulfide. N-linked (GlcNAc...) asparagine glycans are attached at residues N125, N135, and N222. In terms of domain architecture, Fibronectin type-III spans 237 to 328; that stretch reads PPKNLQLKPL…WSEWASVPCS (92 aa).

This sequence belongs to the IL-12B family. Heterodimer with IL12A; disulfide-linked. The heterodimer is known as interleukin IL-12. Heterodimer with IL23A; disulfide-linked. The heterodimer is known as interleukin IL-23. Also secreted as a monomer. Interacts with NBR1; this interaction promotes IL-12 secretion.

The protein localises to the secreted. Functionally, cytokine that can act as a growth factor for activated T and NK cells, enhance the lytic activity of NK/lymphokine-activated killer cells, and stimulate the production of IFN-gamma by resting PBMC. Its function is as follows. Associates with IL23A to form the IL-23 interleukin, a heterodimeric cytokine which functions in innate and adaptive immunity. IL-23 may constitute with IL-17 an acute response to infection in peripheral tissues. IL-23 binds to a heterodimeric receptor complex composed of IL12RB1 and IL23R, activates the Jak-Stat signaling cascade, stimulates memory rather than naive T-cells and promotes production of pro-inflammatory cytokines. IL-23 induces autoimmune inflammation and thus may be responsible for autoimmune inflammatory diseases and may be important for tumorigenesis. The chain is Interleukin-12 subunit beta (IL12B) from Macaca mulatta (Rhesus macaque).